The primary structure comprises 149 residues: Large ribosomal subunit protein uL15 (149 aa).

Residues 1–52 (MSELLKLHHLRPAPGSNKAKIRKGRGEASKGKTAGRGTKGTKARSTVPAGFE) are disordered.

Belongs to the universal ribosomal protein uL15 family. Part of the 50S ribosomal subunit.

In terms of biological role, binds to the 23S rRNA. The protein is Large ribosomal subunit protein uL15 of Thermobifida fusca (strain YX).